We begin with the raw amino-acid sequence, 245 residues long: Type II restriction enzyme MjaIV (245 aa).

It carries out the reaction Endonucleolytic cleavage of DNA to give specific double-stranded fragments with terminal 5'-phosphates.. Functionally, a P subtype restriction enzyme that recognizes the double-stranded sequence 5'-GTNNAC-3'; the cleavage site is unknown. This is Type II restriction enzyme MjaIV (mjaIVR) from Methanocaldococcus jannaschii (strain ATCC 43067 / DSM 2661 / JAL-1 / JCM 10045 / NBRC 100440) (Methanococcus jannaschii).